The sequence spans 232 residues: Ribonuclease P protein component 3 (232 aa).

Belongs to the eukaryotic/archaeal RNase P protein component 3 family. Consists of a catalytic RNA component and at least 4-5 protein subunits.

It localises to the cytoplasm. It carries out the reaction Endonucleolytic cleavage of RNA, removing 5'-extranucleotides from tRNA precursor.. Part of ribonuclease P, a protein complex that generates mature tRNA molecules by cleaving their 5'-ends. The polypeptide is Ribonuclease P protein component 3 (Methanococcus maripaludis (strain C7 / ATCC BAA-1331)).